We begin with the raw amino-acid sequence, 180 residues long: MSALTIFSVKDPQNSLWHSTNAEEIQQQLNAKGVRFERWQADRDLGAAPTAETVIAAYQHAIDKLVAEKGYQSWDVISLRADNPQKEALREKFLNEHTHGEDEVRFFVEGAGLFCLHIGDEVFQVLCEKNDLISVPAHTPHWFDMGSEPNFTAIRIFDNPEGWIAQFTGDDIASAYPRLA.

Residues His97, His99, Glu103, and His141 each contribute to the Fe(2+) site. Ni(2+)-binding residues include His97, His99, Glu103, and His141.

Belongs to the acireductone dioxygenase (ARD) family. Monomer. It depends on Fe(2+) as a cofactor. Mg(2+) is required as a cofactor. Requires Ni(2+) as cofactor. The cofactor is Mn(2+). Co(2+) serves as cofactor.

The catalysed reaction is 1,2-dihydroxy-5-(methylsulfanyl)pent-1-en-3-one + O2 = 3-(methylsulfanyl)propanoate + CO + formate + 2 H(+). It catalyses the reaction 1,2-dihydroxy-5-(methylsulfanyl)pent-1-en-3-one + O2 = 4-methylsulfanyl-2-oxobutanoate + formate + 2 H(+). It functions in the pathway amino-acid biosynthesis; L-methionine biosynthesis via salvage pathway; L-methionine from S-methyl-5-thio-alpha-D-ribose 1-phosphate: step 5/6. In terms of biological role, catalyzes 2 different reactions between oxygen and the acireductone 1,2-dihydroxy-3-keto-5-methylthiopentene (DHK-MTPene) depending upon the metal bound in the active site. Fe-containing acireductone dioxygenase (Fe-ARD) produces formate and 2-keto-4-methylthiobutyrate (KMTB), the alpha-ketoacid precursor of methionine in the methionine recycle pathway. Ni-containing acireductone dioxygenase (Ni-ARD) produces methylthiopropionate, carbon monoxide and formate, and does not lie on the methionine recycle pathway. The polypeptide is Acireductone dioxygenase (mtnD) (Klebsiella oxytoca).